The following is a 133-amino-acid chain: uncharacterized protein (133 aa).

An FAS1 domain is found at 1–130 (MPNIVEIAVS…GIIHVIDNVI (130 aa)).

This is an uncharacterized protein from Synechocystis sp. (strain ATCC 27184 / PCC 6803 / Kazusa).